Reading from the N-terminus, the 344-residue chain is N-acetyl-gamma-glutamyl-phosphate reductase (344 aa).

The active site involves Cys150.

The protein belongs to the NAGSA dehydrogenase family. Type 1 subfamily.

It is found in the cytoplasm. It carries out the reaction N-acetyl-L-glutamate 5-semialdehyde + phosphate + NADP(+) = N-acetyl-L-glutamyl 5-phosphate + NADPH + H(+). It functions in the pathway amino-acid biosynthesis; L-arginine biosynthesis; N(2)-acetyl-L-ornithine from L-glutamate: step 3/4. In terms of biological role, catalyzes the NADPH-dependent reduction of N-acetyl-5-glutamyl phosphate to yield N-acetyl-L-glutamate 5-semialdehyde. This is N-acetyl-gamma-glutamyl-phosphate reductase from Pseudomonas fluorescens (strain SBW25).